Here is a 236-residue protein sequence, read N- to C-terminus: Ubiquinone biosynthesis O-methyltransferase (236 aa).

Arg-36, Gly-56, Asp-77, and Met-125 together coordinate S-adenosyl-L-methionine.

The protein belongs to the methyltransferase superfamily. UbiG/COQ3 family.

The enzyme catalyses a 3-demethylubiquinol + S-adenosyl-L-methionine = a ubiquinol + S-adenosyl-L-homocysteine + H(+). The catalysed reaction is a 3-(all-trans-polyprenyl)benzene-1,2-diol + S-adenosyl-L-methionine = a 2-methoxy-6-(all-trans-polyprenyl)phenol + S-adenosyl-L-homocysteine + H(+). Its pathway is cofactor biosynthesis; ubiquinone biosynthesis. In terms of biological role, O-methyltransferase that catalyzes the 2 O-methylation steps in the ubiquinone biosynthetic pathway. This Haemophilus ducreyi (strain 35000HP / ATCC 700724) protein is Ubiquinone biosynthesis O-methyltransferase.